A 132-amino-acid polypeptide reads, in one-letter code: UPF0299 membrane protein YohJ (132 aa).

Helical transmembrane passes span 7 to 27 (IIWQ…AGIF), 31 to 51 (LLPV…VLLA), 63 to 83 (GCYV…VGVM), and 93 to 113 (FGPV…VVSW).

This sequence belongs to the UPF0299 family.

Its subcellular location is the cell inner membrane. The protein is UPF0299 membrane protein YohJ of Shigella boydii serotype 18 (strain CDC 3083-94 / BS512).